The chain runs to 1921 residues: Mediator of RNA polymerase II transcription subunit 13 (1921 aa).

Glycyl lysine isopeptide (Lys-Gly) (interchain with G-Cter in ubiquitin) cross-links involve residues K220 and K226. Disordered regions lie at residues 400–434 (YEKNGYNSSGSSRNSSISSTSSASSGSGWRMTSRT), 702–724 (TQVEGRKGRHDKLPTVISDNSST), and 1485–1528 (SPTF…GDVS). A compositionally biased stretch (low complexity) spans 407-427 (SSGSSRNSSISSTSSASSGSG). 2 stretches are compositionally biased toward polar residues: residues 1486–1496 (PTFTSLGSESS) and 1515–1527 (EGITSGSSSQGDV).

Belongs to the Mediator complex subunit 13 family. Component of the Mediator complex. Interacts with CYCC1-2 (CDK8 homolog). Ubiquitous. Highest expression in the shoot apex.

Its subcellular location is the nucleus. Its function is as follows. Component of the Mediator complex, a coactivator involved in the regulated transcription of nearly all RNA polymerase II-dependent genes. Mediator functions as a bridge to convey information from gene-specific regulatory proteins to the basal RNA polymerase II transcription machinery. The Mediator complex, having a compact conformation in its free form, is recruited to promoters by direct interactions with regulatory proteins and serves for the assembly of a functional preinitiation complex with RNA polymerase II and the general transcription factors. Acts closely together with MAB12. Involved in the regulation of embryo patterning and cotyledon organogenesis. May act through transient repression of specific genes such as the ones responsive to auxin. This Arabidopsis thaliana (Mouse-ear cress) protein is Mediator of RNA polymerase II transcription subunit 13 (MED13).